The following is a 324-amino-acid chain: MKSISCGKEYTEDVRNINIRPEQLDDFVGQKDLIQNLKVFINAAQTRTEALDHVLLYGPPGLGKTTLAQIVSKELRVSFRATSGPLLSKAGDLAAVLTTLNAKDVLFIDEIHRLNRSIEEVLYTAMEDFCLDILVGEGPSTRTLRIDLPPFTLIGATTRLGLLSAPLRDRFGIPLHLEFYSFEELVNIIKRGARVLSAEIEEDAAREIACRARGTPRIALRLLRRIRDFVEVKDDKKITYEVADSVLLKLGVDKMGLNKLDMNYLRFLFNTSGPVGIDTISIALSEDVGNIEETVEPYLIKISFVKRTPRGRVLTDQAKEYLSL.

Positions 1–180 are large ATPase domain (RuvB-L); that stretch reads MKSISCGKEY…FGIPLHLEFY (180 aa). ATP-binding positions include isoleucine 19, arginine 20, glycine 61, lysine 64, threonine 65, threonine 66, 127–129, arginine 170, tyrosine 180, and arginine 217; that span reads EDF. Position 65 (threonine 65) interacts with Mg(2+). The tract at residues 181-251 is small ATPAse domain (RuvB-S); sequence SFEELVNIIK…VADSVLLKLG (71 aa). Residues 254-324 form a head domain (RuvB-H) region; that stretch reads KMGLNKLDMN…TDQAKEYLSL (71 aa). DNA is bound by residues arginine 307 and arginine 312.

This sequence belongs to the RuvB family. Homohexamer. Forms an RuvA(8)-RuvB(12)-Holliday junction (HJ) complex. HJ DNA is sandwiched between 2 RuvA tetramers; dsDNA enters through RuvA and exits via RuvB. An RuvB hexamer assembles on each DNA strand where it exits the tetramer. Each RuvB hexamer is contacted by two RuvA subunits (via domain III) on 2 adjacent RuvB subunits; this complex drives branch migration. In the full resolvosome a probable DNA-RuvA(4)-RuvB(12)-RuvC(2) complex forms which resolves the HJ.

The protein localises to the cytoplasm. The enzyme catalyses ATP + H2O = ADP + phosphate + H(+). The RuvA-RuvB-RuvC complex processes Holliday junction (HJ) DNA during genetic recombination and DNA repair, while the RuvA-RuvB complex plays an important role in the rescue of blocked DNA replication forks via replication fork reversal (RFR). RuvA specifically binds to HJ cruciform DNA, conferring on it an open structure. The RuvB hexamer acts as an ATP-dependent pump, pulling dsDNA into and through the RuvAB complex. RuvB forms 2 homohexamers on either side of HJ DNA bound by 1 or 2 RuvA tetramers; 4 subunits per hexamer contact DNA at a time. Coordinated motions by a converter formed by DNA-disengaged RuvB subunits stimulates ATP hydrolysis and nucleotide exchange. Immobilization of the converter enables RuvB to convert the ATP-contained energy into a lever motion, pulling 2 nucleotides of DNA out of the RuvA tetramer per ATP hydrolyzed, thus driving DNA branch migration. The RuvB motors rotate together with the DNA substrate, which together with the progressing nucleotide cycle form the mechanistic basis for DNA recombination by continuous HJ branch migration. Branch migration allows RuvC to scan DNA until it finds its consensus sequence, where it cleaves and resolves cruciform DNA. This Wolbachia sp. subsp. Drosophila simulans (strain wRi) protein is Holliday junction branch migration complex subunit RuvB.